A 201-amino-acid polypeptide reads, in one-letter code: Ras-related protein Rab-10 (201 aa).

16 to 23 (GDSGVGKT) is a binding site for GTP. The Effector region signature appears at 38 to 46 (FISTIGIDF). GTP-binding positions include 64-68 (DTAGQ), 122-125 (NKCD), and 152-154 (SAK). Residues 175-201 (PDSTDEQSRDTVNPVQPQRQSSSGGCC) form a disordered region. Residues 184 to 201 (DTVNPVQPQRQSSSGGCC) show a composition bias toward polar residues. 2 S-geranylgeranyl cysteine lipidation sites follow: Cys200 and Cys201.

It belongs to the small GTPase superfamily. Rab family. Interacts (GTP-bound form) with ehbp-1 (via C-terminal coiled coil). Interacts (GTP-bound form) with cnt-1 (via C-terminal ankyrin repeat). Interacts (GTP-bound form) with rab-5 GAP, tbc-2 (via putative coiled coil domain). Interacts (GTP-bound form) with amph-1. As to expression, almost ubiquitously expressed. Expressed in intestine, hypodermis, seam cells, body-wall muscles, many neurons, oviduct sheath cell, spermatheca, coelomocytes and pharyngeal and nerve ring.

The protein localises to the early endosome membrane. It is found in the late endosome membrane. It localises to the golgi apparatus membrane. Its subcellular location is the endosome membrane. The catalysed reaction is GTP + H2O = GDP + phosphate + H(+). With respect to regulation, rab activation is generally mediated by a guanine exchange factor (GEF), while inactivation through hydrolysis of bound GTP is catalyzed by a GTPase activating protein (GAP). Tbc-4 is a likely GAP of this rab. Denn-4 is a putative GEF of this rab. The small GTPases Rab are key regulators of intracellular membrane trafficking, from the formation of transport vesicles to their fusion with membranes. Rabs cycle between an inactive GDP-bound form and an active GTP-bound form that is able to recruit to membranes different set of downstream effectors directly responsible for vesicle formation, movement, tethering and fusion. Required for basolateral endocytic recycling, the return of macromolecules and fluid from endosomes to the plasma membrane, in polarized epithelial cells of the intestine upstream of rme-1. Involved in the formation of the endosomal tubular network that is required for basolateral recycling of clathrin-independent endocytic cargo such as daf-4 in the intestine. Required for the recruitment of cnt-1 effector to endosomal membranes in the intestinal epithelium, which is important for the regulation of levels of endosomal phosphatidylinositol-4,5-bisphosphate, a key phosphoinositide in membrane traffic, and for the recruitment of endosomal membrane-bending proteins, rme-1 and sdpn-1. Recruits the rab-5 GTPase-activating protein tbc-2 to endosomes where it then inactivates rab-5 resulting in removal of rab-5 from membranes, which is necessary for cargo transport from early endosomes to recycling endosomes in the basolateral intestine. Regulates recycling of synaptic membrane AMPA glutamate receptor, glr-1, from intracellular endosomal compartments back to synapses in a cholesterol-dependent endocytosis pathway functioning after clathrin-independent endocytosis in command interneurons. Regulates neuropeptide release from dense core vesicles (DCVs) of cholinergic motoneurons in cooperation with rab-5. They reciprocally recruit each other's inactivating GAP molecule leading to local exclusion of one or the other rab protein at the Golgi-endosomal interphase at an essential stage during DCV sorting. Regulates membrane trafficking of membranes and dendrite proteins from the Golgi and/or endosomal compartments to plasma membrane during dendrite morphogenesis together with the exocyst complex in the multi-dendritic PVD sensory neurons acting in a cell-autonomous manner and requiring its GTPase activity. Functions cell-autonomously together with the exocyst complex to regulate dendrite morphogenesis and anterior-posterior patterning of the PVD neurons dendritic arbor by balancing the anterograde and retrograde transport via molecular motors unc-116 (kinesin heavy chain) and dhc-1 (dynein heavy chain) to appropriately transport branching factors, such as dma-1, to the specific subcellular regions of the developing dendrite in its GTPase activity-dependent manner. This chain is Ras-related protein Rab-10, found in Caenorhabditis elegans.